A 530-amino-acid polypeptide reads, in one-letter code: Glucose-6-phosphate isomerase (530 aa).

Glu347 acts as the Proton donor in catalysis. Active-site residues include His378 and Lys493.

Belongs to the GPI family.

The protein localises to the cytoplasm. The enzyme catalyses alpha-D-glucose 6-phosphate = beta-D-fructose 6-phosphate. It participates in carbohydrate biosynthesis; gluconeogenesis. Its pathway is carbohydrate degradation; glycolysis; D-glyceraldehyde 3-phosphate and glycerone phosphate from D-glucose: step 2/4. Catalyzes the reversible isomerization of glucose-6-phosphate to fructose-6-phosphate. This chain is Glucose-6-phosphate isomerase, found in Chlamydia abortus (strain DSM 27085 / S26/3) (Chlamydophila abortus).